The following is a 595-amino-acid chain: Actin-histidine N-methyltransferase (595 aa).

A disordered region spans residues 1-22 (MGKKSRVKTQKSGTGATATVSP). Over residues 10 to 20 (QKSGTGATATV) the composition is skewed to polar residues. S-adenosyl-L-methionine-binding positions include arginine 75, 104–106 (EGF), arginine 254, 275–279 (DMCNH), and 325–327 (SGF). One can recognise an SET domain in the interval 94 to 314 (EGFEMVNFKE…AGEQIYIFYG (221 aa)). At serine 513 the chain carries Phosphoserine. Over residues 549-573 (ENGLVNGENSIPNGTRSENENLNQE) the composition is skewed to polar residues. Positions 549–595 (ENGLVNGENSIPNGTRSENENLNQEGSKRAVEDAKGSSSDSTDEVKE) are disordered. Positions 574-583 (GSKRAVEDAK) are enriched in basic and acidic residues.

Belongs to the class V-like SAM-binding methyltransferase superfamily. SETD3 actin-histidine methyltransferase family. As to quaternary structure, interacts with MYOD1. In terms of processing, phosphorylated by GSK3B, which is required for recognition by the SCF(FBXW7) complex and subsequent degradation. Ubiquitinated by the SCF(FBXW7) complex following phosphorylation by GSK3B, leading to its degradation by the proteasome.

Its subcellular location is the cytoplasm. It localises to the nucleus. It carries out the reaction L-histidyl-[protein] + S-adenosyl-L-methionine = N(tele)-methyl-L-histidyl-[protein] + S-adenosyl-L-homocysteine + H(+). Functionally, protein-histidine N-methyltransferase that specifically mediates 3-methylhistidine (tele-methylhistidine) methylation of actin at 'His-73'. Histidine methylation of actin is required for smooth muscle contraction of the laboring uterus during delivery. Does not have protein-lysine N-methyltransferase activity and probably only catalyzes histidine methylation of actin. This is Actin-histidine N-methyltransferase from Plecturocebus moloch (Dusky titi monkey).